Consider the following 51-residue polypeptide: Mating pheromone Er-23 (51 aa).

5 disulfide bridges follow: C3-C24, C6-C16, C13-C47, C27-C40, and C35-C51.

The protein resides in the secreted. Its function is as follows. Mating ciliate pheromones (or gamones) are diffusible extracellular communication signals that distinguish different intraspecific classes of cells commonly referred to as 'mating types'. They prepare the latter for conjugation by changing their cell surface properties. The chain is Mating pheromone Er-23 (MAT23) from Euplotes raikovi.